The primary structure comprises 389 residues: Glutamate 5-kinase (389 aa).

Lysine 16 provides a ligand contact to ATP. Residues serine 56, aspartate 143, and asparagine 155 each contribute to the substrate site. An ATP-binding site is contributed by 175–176 (SD). The PUA domain maps to 281 to 358 (AGGLHVDDGA…AEIEAILGYP (78 aa)).

Belongs to the glutamate 5-kinase family.

Its subcellular location is the cytoplasm. The enzyme catalyses L-glutamate + ATP = L-glutamyl 5-phosphate + ADP. Its pathway is amino-acid biosynthesis; L-proline biosynthesis; L-glutamate 5-semialdehyde from L-glutamate: step 1/2. In terms of biological role, catalyzes the transfer of a phosphate group to glutamate to form L-glutamate 5-phosphate. This chain is Glutamate 5-kinase, found in Rhizobium leguminosarum bv. trifolii (strain WSM2304).